The chain runs to 298 residues: CCR4-NOT transcription complex subunit 9 (298 aa).

Belongs to the CNOT9 family. As to quaternary structure, homodimer. Component of the CCR4-NOT complex.

It localises to the nucleus. It is found in the cytoplasm. The protein localises to the P-body. Component of the CCR4-NOT complex which is one of the major cellular mRNA deadenylases and is linked to various cellular processes including bulk mRNA degradation, miRNA-mediated repression, translational repression during translational initiation and general transcription regulation. Additional complex functions may be a consequence of its influence on mRNA expression. Involved in down-regulation of MYB- and JUN-dependent transcription. Enhances ligand-dependent transcriptional activity of nuclear hormone receptors. May play a role in cell differentiation. The chain is CCR4-NOT transcription complex subunit 9 from Danio rerio (Zebrafish).